Consider the following 402-residue polypeptide: Tyrosine--tRNA ligase (402 aa).

The 'HIGH' region signature appears at 47–56 (PTAPDLHLGH). Positions 232-236 (KMSKS) match the 'KMSKS' region motif. Residue lysine 235 participates in ATP binding. The S4 RNA-binding domain maps to 341 to 401 (VGILDVLKQI…GKKRFMKLNI (61 aa)).

The protein belongs to the class-I aminoacyl-tRNA synthetase family. TyrS type 2 subfamily. In terms of assembly, homodimer.

It localises to the cytoplasm. It catalyses the reaction tRNA(Tyr) + L-tyrosine + ATP = L-tyrosyl-tRNA(Tyr) + AMP + diphosphate + H(+). Functionally, catalyzes the attachment of tyrosine to tRNA(Tyr) in a two-step reaction: tyrosine is first activated by ATP to form Tyr-AMP and then transferred to the acceptor end of tRNA(Tyr). In Helicobacter pylori (strain ATCC 700392 / 26695) (Campylobacter pylori), this protein is Tyrosine--tRNA ligase.